A 264-amino-acid chain; its full sequence is Segregation and condensation protein A (264 aa).

Belongs to the ScpA family. As to quaternary structure, component of a cohesin-like complex composed of ScpA, ScpB and the Smc homodimer, in which ScpA and ScpB bind to the head domain of Smc. The presence of the three proteins is required for the association of the complex with DNA.

The protein resides in the cytoplasm. Participates in chromosomal partition during cell division. May act via the formation of a condensin-like complex containing Smc and ScpB that pull DNA away from mid-cell into both cell halves. The sequence is that of Segregation and condensation protein A from Enterococcus faecalis (strain ATCC 700802 / V583).